The sequence spans 77 residues: Cell division topological specificity factor (77 aa).

The protein belongs to the MinE family.

In terms of biological role, prevents the cell division inhibition by proteins MinC and MinD at internal division sites while permitting inhibition at polar sites. This ensures cell division at the proper site by restricting the formation of a division septum at the midpoint of the long axis of the cell. The polypeptide is Cell division topological specificity factor (Helicobacter pylori (strain P12)).